The following is a 276-amino-acid chain: 4-diphosphocytidyl-2-C-methyl-D-erythritol kinase (276 aa).

Lysine 13 is a catalytic residue. 94–104 serves as a coordination point for ATP; it reads PHAGGIGGGSA. Aspartate 131 is an active-site residue.

This sequence belongs to the GHMP kinase family. IspE subfamily.

The catalysed reaction is 4-CDP-2-C-methyl-D-erythritol + ATP = 4-CDP-2-C-methyl-D-erythritol 2-phosphate + ADP + H(+). It participates in isoprenoid biosynthesis; isopentenyl diphosphate biosynthesis via DXP pathway; isopentenyl diphosphate from 1-deoxy-D-xylulose 5-phosphate: step 3/6. Its function is as follows. Catalyzes the phosphorylation of the position 2 hydroxy group of 4-diphosphocytidyl-2C-methyl-D-erythritol. The sequence is that of 4-diphosphocytidyl-2-C-methyl-D-erythritol kinase from Jannaschia sp. (strain CCS1).